The primary structure comprises 39 residues: uncharacterized protein (39 aa).

This is an uncharacterized protein from Saccharomyces cerevisiae (strain ATCC 204508 / S288c) (Baker's yeast).